Here is a 216-residue protein sequence, read N- to C-terminus: GTP cyclohydrolase-2 (216 aa).

Residue 50–54 participates in GTP binding; sequence RIHSE. Residues cysteine 55, cysteine 66, and cysteine 68 each contribute to the Zn(2+) site. Residues glutamine 71, 93-95, and threonine 115 contribute to the GTP site; that span reads EGR. Aspartate 127 (proton acceptor) is an active-site residue. The Nucleophile role is filled by arginine 129. The GTP site is built by threonine 150 and lysine 155.

It belongs to the GTP cyclohydrolase II family. It depends on Zn(2+) as a cofactor.

The catalysed reaction is GTP + 4 H2O = 2,5-diamino-6-hydroxy-4-(5-phosphoribosylamino)-pyrimidine + formate + 2 phosphate + 3 H(+). The protein operates within cofactor biosynthesis; riboflavin biosynthesis; 5-amino-6-(D-ribitylamino)uracil from GTP: step 1/4. Its function is as follows. Catalyzes the conversion of GTP to 2,5-diamino-6-ribosylamino-4(3H)-pyrimidinone 5'-phosphate (DARP), formate and pyrophosphate. The polypeptide is GTP cyclohydrolase-2 (Histophilus somni (strain 129Pt) (Haemophilus somnus)).